Here is a 302-residue protein sequence, read N- to C-terminus: Recombination-associated protein RdgC (302 aa).

It belongs to the RdgC family.

It localises to the cytoplasm. It is found in the nucleoid. Functionally, may be involved in recombination. This is Recombination-associated protein RdgC from Mannheimia succiniciproducens (strain KCTC 0769BP / MBEL55E).